The chain runs to 391 residues: Heme A synthase (391 aa).

8 helical membrane-spanning segments follow: residues 37–57 (IRLW…VGGL), 121–141 (RQLG…FLAA), 152–172 (LLAL…MVAS), 186–206 (LATH…QALL), 229–249 (TTVL…VAGI), 298–318 (FLHR…WIFG), 332–352 (LLAM…LSAA), and 354–374 (WQVA…ILHA). His-300 provides a ligand contact to heme. His-360 is a binding site for heme.

This sequence belongs to the COX15/CtaA family. Type 2 subfamily. As to quaternary structure, interacts with CtaB. Heme b is required as a cofactor.

The protein localises to the cell membrane. The enzyme catalyses Fe(II)-heme o + 2 A + H2O = Fe(II)-heme a + 2 AH2. The protein operates within porphyrin-containing compound metabolism; heme A biosynthesis; heme A from heme O: step 1/1. In terms of biological role, catalyzes the conversion of heme O to heme A by two successive hydroxylations of the methyl group at C8. The first hydroxylation forms heme I, the second hydroxylation results in an unstable dihydroxymethyl group, which spontaneously dehydrates, resulting in the formyl group of heme A. This chain is Heme A synthase, found in Cereibacter sphaeroides (strain ATCC 17029 / ATH 2.4.9) (Rhodobacter sphaeroides).